We begin with the raw amino-acid sequence, 489 residues long: Virion host shutoff protein (489 aa).

4 disordered regions span residues 110 to 135, 142 to 161, 285 to 316, and 333 to 363; these read EEAS…AFSN, SLAS…PSAA, RSQT…GGTE, and YEDD…ILTP. Polar residues predominate over residues 124 to 134; it reads ITDSRPSSAFS.

The protein belongs to the herpesviridae VHS protein family. As to quaternary structure, interacts with human EIF4H, EIF4A1 and EIF4A2; interaction with eIF4AI and EIF4A2 presumably allows Vhs protein to associate with the eIF4F cap-binding complex.

Its subcellular location is the virion. Functionally, minor structural protein that acts as an endoribonuclease during lytic infection. Degrades host mRNAs in the cytoplasm by cutting them at preferred sites, including some in regions of translation initiation. Together with inhibition of host splicing by ICP27, contributes to an overall decrease in host protein synthesis. Also, after the onset of viral transcription, accelerates the turnover of viral mRNA, thereby facilitating the sequential expression of different classes of viral genes. Binds translation initiation factors eIF4H, eIF4AI, and eIF4AII, thereby may interact directly with the translation initiation complex and thus digest specifically mRNAs. Also impedes antigen presentation by major histocompatibility complex class I and class II molecules, inhibits secretion of cytokines that would otherwise recruit lymphocytes and neutrophils cells to the site of infection and blocks the activation of dendritic cells. Impedes the alpha/beta interferon-mediated response to infection by evading the cGAS/ STING-mediated DNA-sensing pathway and degrading CGAS via its RNase activity. This Human herpesvirus 1 (strain KOS) (HHV-1) protein is Virion host shutoff protein (UL41).